Reading from the N-terminus, the 743-residue chain is Elongation factor 2 (743 aa).

Residues 19 to 265 (NNIRNIGIIA…MVVRHLPSPK (247 aa)) form the tr-type G domain. GTP is bound by residues 28-35 (AHIHHGKT), 94-98 (DTPGH), and 148-151 (NKVD). Position 615 is a diphthamide (histidine 615).

Belongs to the TRAFAC class translation factor GTPase superfamily. Classic translation factor GTPase family. EF-G/EF-2 subfamily.

The protein resides in the cytoplasm. Its function is as follows. Catalyzes the GTP-dependent ribosomal translocation step during translation elongation. During this step, the ribosome changes from the pre-translocational (PRE) to the post-translocational (POST) state as the newly formed A-site-bound peptidyl-tRNA and P-site-bound deacylated tRNA move to the P and E sites, respectively. Catalyzes the coordinated movement of the two tRNA molecules, the mRNA and conformational changes in the ribosome. The chain is Elongation factor 2 from Nanoarchaeum equitans (strain Kin4-M).